Consider the following 178-residue polypeptide: Cell division protein SepF (178 aa).

Over residues glutamate 19 to alanine 45 the composition is skewed to basic and acidic residues. Residues glutamate 19–glutamate 65 form a disordered region.

It belongs to the SepF family. Homodimer. Interacts with FtsZ.

The protein localises to the cytoplasm. Cell division protein that is part of the divisome complex and is recruited early to the Z-ring. Probably stimulates Z-ring formation, perhaps through the cross-linking of FtsZ protofilaments. Its function overlaps with FtsA. The sequence is that of Cell division protein SepF from Arthrobacter sp. (strain FB24).